The following is a 679-amino-acid chain: MEDRNKISLRSGRRKKRPTISAPRQISGPIAQDDSNRPPLPGADPSQASAQPRPRPPPMAGGKTSDLVKRRYSTRFNQPSSISNGGAPPMPQMPSLANYEPRETVAAARKPPSRSGPGVAPVIDIKGLRDPKLKPDRYVQAALSDATEDQIREFEESLRQVKTRVGTDLQQSVMQNRTQFIKISKEAEKLKSEMRNLKNFMSELKVNTTAMRAAAAKSDEPMPSDLGVAPGISSRRDRRTSIADRSAMWNSQMQALYKGVEGSQKFLPNAVGRHVVQDAGPWIELDNATYKSRRAMQIFLLNDHLLIASRKKRKADAPGADARGPMMKLVADRCWPLLDVEVVDMSSTGESSNSGRNKLADAIMVRGVGQESFIYRTEKPQDPEKKQLLLNVRKAIEQLRKGLRSEMEANNKARETINYFASRDPGLLQKTELLATLSDIKDMLIEVDGKQQNLRWVESEMDDLDIDVAMQRFEDAVVRVEKLKAIARGLKNHAIAQDFINFKVNERCVRLANMIGRELEMTHDNNTKTRRNVSWLTRLGFEDSARESYLAARSGTIHKRTRQCIFQGDLHLYIWELSFVYFMVIHNTVQCFQSCFPPPMMSVCVKWAKEEVDAFNIILARQLSSTELRGQVWTQCMERAKEHSKLLSEVGLDFENLVGKNLMIYEPIDQGPSVGLGLS.

The interval 1–123 is disordered; sequence MEDRNKISLR…RSGPGVAPVI (123 aa). Positions 74–84 are enriched in polar residues; sequence TRFNQPSSISN. The stretch at 142 to 208 forms a coiled coil; that stretch reads ALSDATEDQI…NFMSELKVNT (67 aa). The interval 214 to 237 is disordered; sequence AAAKSDEPMPSDLGVAPGISSRRD.

Belongs to the EXO84 family. As to quaternary structure, component of the exocyst complex.

It is found in the cytoplasmic vesicle. Its subcellular location is the secretory vesicle. Involved in the secretory pathway as part of the exocyst complex which tethers secretory vesicles to the sites of exocytosis. Plays a role in both the assembly of the exocyst and the polarization of this complex to specific sites of the plasma membrane for exocytosis. Also involved in assembly of the spliceosome. This is Exocyst complex component EXO84 (EXO84) from Gibberella zeae (strain ATCC MYA-4620 / CBS 123657 / FGSC 9075 / NRRL 31084 / PH-1) (Wheat head blight fungus).